Consider the following 395-residue polypeptide: uncharacterized protein (395 aa).

Positions 1–18 (MKHVIMLYFIAAATLFSS) are cleaved as a signal peptide. A lipid anchor (N-palmitoyl cysteine) is attached at Cys-19. A lipid anchor (S-diacylglycerol cysteine) is attached at Cys-19.

Its subcellular location is the cell outer membrane. Functionally, may be involved in ulvan degradation. Ulvan is the main polysaccharide component of the Ulvales (green seaweed) cell wall. It is composed of disaccharide building blocks comprising 3-sulfated rhamnose (Rha3S) linked to D-glucuronic acid (GlcA), L-iduronic acid (IduA), or D-xylose (Xyl). This is an uncharacterized protein from Formosa agariphila (strain DSM 15362 / KCTC 12365 / LMG 23005 / KMM 3901 / M-2Alg 35-1).